Here is a 116-residue protein sequence, read N- to C-terminus: Putative iron-sulfur cluster insertion protein ErpA (116 aa).

The iron-sulfur cluster site is built by Cys-44, Cys-108, and Cys-110.

The protein belongs to the HesB/IscA family. In terms of assembly, homodimer. It depends on iron-sulfur cluster as a cofactor.

Functionally, required for insertion of 4Fe-4S clusters. The polypeptide is Putative iron-sulfur cluster insertion protein ErpA (Azoarcus sp. (strain BH72)).